We begin with the raw amino-acid sequence, 205 residues long: Thiamine-phosphate synthase (205 aa).

4-amino-2-methyl-5-(diphosphooxymethyl)pyrimidine contacts are provided by residues Gln-36 to Lys-40 and Asp-68. The Mg(2+) site is built by Asp-69 and Asp-88. Ser-106 contacts 4-amino-2-methyl-5-(diphosphooxymethyl)pyrimidine. Ser-132 to Thr-134 lines the 2-[(2R,5Z)-2-carboxy-4-methylthiazol-5(2H)-ylidene]ethyl phosphate pocket. A 4-amino-2-methyl-5-(diphosphooxymethyl)pyrimidine-binding site is contributed by Lys-135. 2-[(2R,5Z)-2-carboxy-4-methylthiazol-5(2H)-ylidene]ethyl phosphate is bound by residues Gly-162 and Ile-182–Ser-183.

Belongs to the thiamine-phosphate synthase family. The cofactor is Mg(2+).

It catalyses the reaction 2-[(2R,5Z)-2-carboxy-4-methylthiazol-5(2H)-ylidene]ethyl phosphate + 4-amino-2-methyl-5-(diphosphooxymethyl)pyrimidine + 2 H(+) = thiamine phosphate + CO2 + diphosphate. The catalysed reaction is 2-(2-carboxy-4-methylthiazol-5-yl)ethyl phosphate + 4-amino-2-methyl-5-(diphosphooxymethyl)pyrimidine + 2 H(+) = thiamine phosphate + CO2 + diphosphate. It carries out the reaction 4-methyl-5-(2-phosphooxyethyl)-thiazole + 4-amino-2-methyl-5-(diphosphooxymethyl)pyrimidine + H(+) = thiamine phosphate + diphosphate. Its pathway is cofactor biosynthesis; thiamine diphosphate biosynthesis; thiamine phosphate from 4-amino-2-methyl-5-diphosphomethylpyrimidine and 4-methyl-5-(2-phosphoethyl)-thiazole: step 1/1. Functionally, condenses 4-methyl-5-(beta-hydroxyethyl)thiazole monophosphate (THZ-P) and 2-methyl-4-amino-5-hydroxymethyl pyrimidine pyrophosphate (HMP-PP) to form thiamine monophosphate (TMP). The polypeptide is Thiamine-phosphate synthase (Caldivirga maquilingensis (strain ATCC 700844 / DSM 13496 / JCM 10307 / IC-167)).